The following is a 98-amino-acid chain: Defensin-like protein 192 (98 aa).

A signal peptide spans 1 to 27; it reads MATKSVSTFAIFFILVLAIFETPEIEA. 4 cysteine pairs are disulfide-bonded: Cys-32–Cys-86, Cys-45–Cys-69, Cys-54–Cys-81, and Cys-58–Cys-83.

It belongs to the DEFL family. Protease inhibitor I18 (RTI/MTI-2) subfamily.

Its subcellular location is the secreted. The chain is Defensin-like protein 192 (ATTI7) from Arabidopsis thaliana (Mouse-ear cress).